The primary structure comprises 276 residues: Orotidine 5'-phosphate decarboxylase (276 aa).

Lys93 functions as the Proton donor in the catalytic mechanism.

This sequence belongs to the OMP decarboxylase family. Type 2 subfamily.

It catalyses the reaction orotidine 5'-phosphate + H(+) = UMP + CO2. It participates in pyrimidine metabolism; UMP biosynthesis via de novo pathway; UMP from orotate: step 2/2. The chain is Orotidine 5'-phosphate decarboxylase from Halorubrum lacusprofundi (strain ATCC 49239 / DSM 5036 / JCM 8891 / ACAM 34).